The following is a 424-amino-acid chain: Serine hydroxymethyltransferase (424 aa).

(6S)-5,6,7,8-tetrahydrofolate-binding positions include L118 and G122 to L124. K227 is modified (N6-(pyridoxal phosphate)lysine). S351–F353 lines the (6S)-5,6,7,8-tetrahydrofolate pocket.

Belongs to the SHMT family. Homodimer. It depends on pyridoxal 5'-phosphate as a cofactor.

The protein localises to the cytoplasm. It catalyses the reaction (6R)-5,10-methylene-5,6,7,8-tetrahydrofolate + glycine + H2O = (6S)-5,6,7,8-tetrahydrofolate + L-serine. It participates in one-carbon metabolism; tetrahydrofolate interconversion. The protein operates within amino-acid biosynthesis; glycine biosynthesis; glycine from L-serine: step 1/1. In terms of biological role, catalyzes the reversible interconversion of serine and glycine with tetrahydrofolate (THF) serving as the one-carbon carrier. This reaction serves as the major source of one-carbon groups required for the biosynthesis of purines, thymidylate, methionine, and other important biomolecules. Also exhibits THF-independent aldolase activity toward beta-hydroxyamino acids, producing glycine and aldehydes, via a retro-aldol mechanism. The sequence is that of Serine hydroxymethyltransferase from Pseudothermotoga lettingae (strain ATCC BAA-301 / DSM 14385 / NBRC 107922 / TMO) (Thermotoga lettingae).